The chain runs to 320 residues: Cytochrome f (320 aa).

An N-terminal signal peptide occupies residues 1–35 (MQTRNAFSCIKEGITRSISISVMIYIIIRAPFSNA). Heme-binding residues include tyrosine 36, cysteine 56, cysteine 59, and histidine 60. A helical membrane pass occupies residues 286–306 (VQGLLFFLASIILAQIFLVLK).

Belongs to the cytochrome f family. The 4 large subunits of the cytochrome b6-f complex are cytochrome b6, subunit IV (17 kDa polypeptide, petD), cytochrome f and the Rieske protein, while the 4 small subunits are PetG, PetL, PetM and PetN. The complex functions as a dimer. Requires heme as cofactor.

It is found in the plastid. Its subcellular location is the chloroplast thylakoid membrane. Functionally, component of the cytochrome b6-f complex, which mediates electron transfer between photosystem II (PSII) and photosystem I (PSI), cyclic electron flow around PSI, and state transitions. This chain is Cytochrome f, found in Phaseolus vulgaris (Kidney bean).